Here is a 453-residue protein sequence, read N- to C-terminus: T-box transcription factor T homolog (453 aa).

Positions 47–217 (LWRRFSKLTN…YNPFAKAFLD (171 aa)) form a DNA-binding region, T-box. A disordered region spans residues 283–304 (RSHRSTPYPPPPYEQKYSPTSA).

It is found in the nucleus. May be involved in the transcriptional regulation of genes required for gastrulation. This chain is T-box transcription factor T homolog, found in Patiria pectinifera (Starfish).